Reading from the N-terminus, the 662-residue chain is Eukaryotic peptide chain release factor GTP-binding subunit (662 aa).

The tract at residues 1–220 is disordered; the sequence is MASNQPNNGE…PATVTEDATD (220 aa). The segment covering 26–40 has biased composition (low complexity); sequence AKAPTFTPKAAPFIP. A compositionally biased stretch (polar residues) spans 62 to 89; that stretch reads YTGQGQNSNSPHPTKSYQQYYQKPTGNT. Residues 91-102 show a composition bias toward basic and acidic residues; it reads DEDKSRVPDFSK. Over residues 122–134 the composition is skewed to polar residues; the sequence is GGNTSAPKSTKPI. A compositionally biased stretch (low complexity) spans 141–158; that stretch reads TKAPTTTKPAAPAAQSKT. Phosphothreonine is present on Thr-182. The span at 192–213 shows a compositional bias: low complexity; it reads AKTPSAPAAALKKAAEAAEPAT. One can recognise a tr-type G domain in the interval 236 to 464; sequence KEHVNIVFIG…LDSMTHLERK (229 aa). The segment at 245 to 252 is G1; sequence GHVDAGKS. Residue 245–252 participates in GTP binding; sequence GHVDAGKS. Residues 301 to 305 are G2; the sequence is GKTVE. Residues 322-325 form a G3 region; it reads DAPG. GTP contacts are provided by residues 384-387 and 428-429; these read NKMD and AY. Positions 384–387 are G4; it reads NKMD. The tract at residues 427-429 is G5; that stretch reads SAY. Ser-539 carries the phosphoserine modification.

Belongs to the TRAFAC class translation factor GTPase superfamily. Classic translation factor GTPase family. ERF3 subfamily. Component of the eRF1-eRF3-GTP ternary complex, composed of sup45/eRF1, sup35/eRF3 and GTP.

The protein localises to the cytoplasm. It catalyses the reaction GTP + H2O = GDP + phosphate + H(+). Functionally, GTPase component of the eRF1-eRF3-GTP ternary complex, a ternary complex that mediates translation termination in response to the termination codons. Sup35/eRF3 mediates sup45/ERF1 delivery to stop codons: The eRF1-eRF3-GTP complex binds to a stop codon in the ribosomal A-site. GTP hydrolysis by sup35/eRF3 induces a conformational change that leads to its dissociation, permitting sup45/eRF1 to accommodate fully in the A-site. The protein is Eukaryotic peptide chain release factor GTP-binding subunit (sup35) of Schizosaccharomyces pombe (strain 972 / ATCC 24843) (Fission yeast).